We begin with the raw amino-acid sequence, 330 residues long: Quinone oxidoreductase (330 aa).

Position 2 is an N-acetylalanine (A2). The residue at position 23 (K23) is an N6-acetyllysine. NADP(+) contacts are provided by residues Y53, 158-161 (SGGV), G181, H200, N229, 246-249 (VGSK), and 269-271 (VTL). Residue S248 is modified to Phosphoserine.

The protein belongs to the zinc-containing alcohol dehydrogenase family. Quinone oxidoreductase subfamily. Homotetramer.

The protein resides in the cytoplasm. The catalysed reaction is 2 a quinone + NADPH + H(+) = 2 a 1,4-benzosemiquinone + NADP(+). Functionally, does not have alcohol dehydrogenase activity. Binds NADP and acts through a one-electron transfer process. Orthoquinones, such as 1,2-naphthoquinone or 9,10-phenanthrenequinone, are the best substrates (in vitro). May act in the detoxification of xenobiotics. Interacts with (AU)-rich elements (ARE) in the 3'-UTR of target mRNA species and enhances their stability. NADPH binding interferes with mRNA binding. This chain is Quinone oxidoreductase (CRYZ), found in Lama guanicoe (Guanaco).